We begin with the raw amino-acid sequence, 485 residues long: Glutamate--tRNA ligase 1 (485 aa).

Residues 10-20 carry the 'HIGH' region motif; sequence PSPTGAIHIGN. The 'KMSKS' region motif lies at 252–256; that stretch reads KLSKR. ATP is bound at residue Lys-255.

The protein belongs to the class-I aminoacyl-tRNA synthetase family. Glutamate--tRNA ligase type 1 subfamily. In terms of assembly, monomer.

The protein resides in the cytoplasm. It carries out the reaction tRNA(Glu) + L-glutamate + ATP = L-glutamyl-tRNA(Glu) + AMP + diphosphate. In terms of biological role, catalyzes the attachment of glutamate to tRNA(Glu) in a two-step reaction: glutamate is first activated by ATP to form Glu-AMP and then transferred to the acceptor end of tRNA(Glu). The protein is Glutamate--tRNA ligase 1 of Thermoanaerobacter sp. (strain X514).